The following is a 158-amino-acid chain: Cyclic pyranopterin monophosphate synthase (158 aa).

Residues 75-77 (LCH) and 113-114 (ME) each bind substrate. Asp128 is an active-site residue.

The protein belongs to the MoaC family. As to quaternary structure, homohexamer; trimer of dimers.

It catalyses the reaction (8S)-3',8-cyclo-7,8-dihydroguanosine 5'-triphosphate = cyclic pyranopterin phosphate + diphosphate. The protein operates within cofactor biosynthesis; molybdopterin biosynthesis. Catalyzes the conversion of (8S)-3',8-cyclo-7,8-dihydroguanosine 5'-triphosphate to cyclic pyranopterin monophosphate (cPMP). The sequence is that of Cyclic pyranopterin monophosphate synthase from Actinobacillus pleuropneumoniae serotype 5b (strain L20).